The chain runs to 142 residues: Pleckstrin homology-like domain family A member 2 (142 aa).

Ser3 carries the post-translational modification Phosphoserine. In terms of domain architecture, PH spans 7–99 (VLREGELEKR…WNASITLALI (93 aa)).

The protein belongs to the PHLDA2 family.

It is found in the cytoplasm. The protein resides in the membrane. In terms of biological role, plays a role in regulating placenta growth. May act via its PH domain that competes with other PH domain-containing proteins, thereby preventing their binding to membrane lipids. The polypeptide is Pleckstrin homology-like domain family A member 2 (PHLDA2) (Bos taurus (Bovine)).